Here is a 400-residue protein sequence, read N- to C-terminus: Phosphoglycerate kinase (400 aa).

Residues 22–24, arginine 38, 61–64, arginine 119, and arginine 152 contribute to the substrate site; these read DFN and HLGR. ATP-binding positions include lysine 205, glycine 296, glutamate 327, and 353–356; that span reads GGDT.

It belongs to the phosphoglycerate kinase family. In terms of assembly, monomer.

It is found in the cytoplasm. It carries out the reaction (2R)-3-phosphoglycerate + ATP = (2R)-3-phospho-glyceroyl phosphate + ADP. The protein operates within carbohydrate degradation; glycolysis; pyruvate from D-glyceraldehyde 3-phosphate: step 2/5. In Campylobacter jejuni subsp. doylei (strain ATCC BAA-1458 / RM4099 / 269.97), this protein is Phosphoglycerate kinase.